The chain runs to 249 residues: 3-deoxy-D-manno-octulosonic acid kinase (249 aa).

Residue Asp-175 is part of the active site.

The protein belongs to the protein kinase superfamily. KdkA/RfaP family.

The protein resides in the cell inner membrane. The enzyme catalyses an alpha-Kdo-(2-&gt;6)-lipid IVA + ATP = a 4-O-phospho-alpha-Kdo-(2-&gt;6)-lipid IVA + ADP + H(+). It functions in the pathway bacterial outer membrane biogenesis; LPS core biosynthesis. Functionally, catalyzes the ATP-dependent phosphorylation of the 3-deoxy-D-manno-octulosonic acid (Kdo) residue in Kdo-lipid IV(A) at the 4-OH position. This Xanthomonas axonopodis pv. citri (strain 306) protein is 3-deoxy-D-manno-octulosonic acid kinase.